The primary structure comprises 151 residues: Methylglyoxal synthase (151 aa).

The 146-residue stretch at 6 to 151 (RVMPAHKHIA…DYDAYLAERV (146 aa)) folds into the MGS-like domain. Substrate contacts are provided by residues H19, K23, 45–48 (TGTT), and 65–66 (SG). D71 (proton donor/acceptor) is an active-site residue. Residue H98 participates in substrate binding.

Belongs to the methylglyoxal synthase family.

The enzyme catalyses dihydroxyacetone phosphate = methylglyoxal + phosphate. Catalyzes the formation of methylglyoxal from dihydroxyacetone phosphate. The sequence is that of Methylglyoxal synthase from Aliivibrio fischeri (strain ATCC 700601 / ES114) (Vibrio fischeri).